The primary structure comprises 197 residues: dTTP/UTP pyrophosphatase (197 aa).

The active-site Proton acceptor is the Asp70.

Belongs to the Maf family. YhdE subfamily. As to quaternary structure, homodimer. Can also form homotetramers. It depends on a divalent metal cation as a cofactor.

It is found in the cytoplasm. The enzyme catalyses dTTP + H2O = dTMP + diphosphate + H(+). It catalyses the reaction UTP + H2O = UMP + diphosphate + H(+). The catalysed reaction is 5-methyl-UTP + H2O = 5-methyl-UMP + diphosphate + H(+). It carries out the reaction psi-UTP + H2O = psi-UMP + diphosphate + H(+). The enzyme catalyses 5-methyl-CTP + H2O = 5-methyl-CMP + diphosphate + H(+). Functionally, nucleoside triphosphate pyrophosphatase that hydrolyzes dTTP and UTP. Can also hydrolyze TTP and the modified nucleotides 5-methyl-UTP (m(5)UTP), pseudo-UTP and 5-methyl-CTP (m(5)CTP). Has weak activity with CTP. May have a dual role in cell division arrest and in preventing the incorporation of modified nucleotides into cellular nucleic acids. Important in maintenance of cell shape. The protein is dTTP/UTP pyrophosphatase (yhdE) of Escherichia coli (strain K12).